Consider the following 196-residue polypeptide: Glycerol-3-phosphate acyltransferase (196 aa).

Helical transmembrane passes span 4 to 24 (LTLT…AILV), 56 to 76 (ATVL…AYFL), 80 to 100 (SLYL…PIFF), 114 to 134 (TLLP…VLVV), and 155 to 175 (VYFL…LILF).

It belongs to the PlsY family. As to quaternary structure, probably interacts with PlsX.

The protein localises to the cell inner membrane. The catalysed reaction is an acyl phosphate + sn-glycerol 3-phosphate = a 1-acyl-sn-glycero-3-phosphate + phosphate. It participates in lipid metabolism; phospholipid metabolism. Functionally, catalyzes the transfer of an acyl group from acyl-phosphate (acyl-PO(4)) to glycerol-3-phosphate (G3P) to form lysophosphatidic acid (LPA). This enzyme utilizes acyl-phosphate as fatty acyl donor, but not acyl-CoA or acyl-ACP. The sequence is that of Glycerol-3-phosphate acyltransferase from Colwellia psychrerythraea (strain 34H / ATCC BAA-681) (Vibrio psychroerythus).